A 235-amino-acid chain; its full sequence is tRNA (guanine-N(1)-)-methyltransferase (235 aa).

Residues glycine 112 and 132–137 (IGDYVI) each bind S-adenosyl-L-methionine.

This sequence belongs to the RNA methyltransferase TrmD family. As to quaternary structure, homodimer.

It localises to the cytoplasm. It catalyses the reaction guanosine(37) in tRNA + S-adenosyl-L-methionine = N(1)-methylguanosine(37) in tRNA + S-adenosyl-L-homocysteine + H(+). In terms of biological role, specifically methylates guanosine-37 in various tRNAs. The chain is tRNA (guanine-N(1)-)-methyltransferase from Anaplasma marginale (strain Florida).